Consider the following 227-residue polypeptide: Deoxyribose-phosphate aldolase (227 aa).

Asp-98 (proton donor/acceptor) is an active-site residue. Lys-161 acts as the Schiff-base intermediate with acetaldehyde in catalysis. Lys-191 (proton donor/acceptor) is an active-site residue.

It belongs to the DeoC/FbaB aldolase family. DeoC type 1 subfamily.

It localises to the cytoplasm. The catalysed reaction is 2-deoxy-D-ribose 5-phosphate = D-glyceraldehyde 3-phosphate + acetaldehyde. It functions in the pathway carbohydrate degradation; 2-deoxy-D-ribose 1-phosphate degradation; D-glyceraldehyde 3-phosphate and acetaldehyde from 2-deoxy-alpha-D-ribose 1-phosphate: step 2/2. Its function is as follows. Catalyzes a reversible aldol reaction between acetaldehyde and D-glyceraldehyde 3-phosphate to generate 2-deoxy-D-ribose 5-phosphate. The protein is Deoxyribose-phosphate aldolase of Frankia alni (strain DSM 45986 / CECT 9034 / ACN14a).